Here is a 350-residue protein sequence, read N- to C-terminus: Flap endonuclease 1 (350 aa).

The N-domain stretch occupies residues 1–102 (MGVTALRELI…REIERRQKLK (102 aa)). Positions 31, 84, 156, 158, 177, 179, and 240 each coordinate Mg(2+). Positions 120–261 (EARKYAQMSA…TALRYVKSYG (142 aa)) are I-domain. Positions 339–347 (KQSTLDMFF) are interaction with PCNA.

The protein belongs to the XPG/RAD2 endonuclease family. FEN1 subfamily. In terms of assembly, interacts with PCNA. PCNA stimulates the nuclease activity without altering cleavage specificity. Requires Mg(2+) as cofactor.

In terms of biological role, structure-specific nuclease with 5'-flap endonuclease and 5'-3' exonuclease activities involved in DNA replication and repair. During DNA replication, cleaves the 5'-overhanging flap structure that is generated by displacement synthesis when DNA polymerase encounters the 5'-end of a downstream Okazaki fragment. Binds the unpaired 3'-DNA end and kinks the DNA to facilitate 5' cleavage specificity. Cleaves one nucleotide into the double-stranded DNA from the junction in flap DNA, leaving a nick for ligation. Also involved in the base excision repair (BER) pathway. Acts as a genome stabilization factor that prevents flaps from equilibrating into structures that lead to duplications and deletions. Also possesses 5'-3' exonuclease activity on nicked or gapped double-stranded DNA. The protein is Flap endonuclease 1 of Ignicoccus hospitalis (strain KIN4/I / DSM 18386 / JCM 14125).